The primary structure comprises 306 residues: Oxygen-dependent coproporphyrinogen-III oxidase (306 aa).

Serine 99 provides a ligand contact to substrate. Histidine 103 and histidine 113 together coordinate a divalent metal cation. The active-site Proton donor is histidine 113. 115–117 contacts substrate; sequence NVR. Residues histidine 152 and histidine 182 each coordinate a divalent metal cation. The tract at residues 247 to 282 is important for dimerization; the sequence is YVEFNLVFDRGTLFGLQSGGRTESILMSMPPVANWR. Residue 265 to 267 coordinates substrate; that stretch reads GGR.

This sequence belongs to the aerobic coproporphyrinogen-III oxidase family. Homodimer. Requires a divalent metal cation as cofactor.

It is found in the cytoplasm. The catalysed reaction is coproporphyrinogen III + O2 + 2 H(+) = protoporphyrinogen IX + 2 CO2 + 2 H2O. It participates in porphyrin-containing compound metabolism; protoporphyrin-IX biosynthesis; protoporphyrinogen-IX from coproporphyrinogen-III (O2 route): step 1/1. In terms of biological role, involved in the heme biosynthesis. Catalyzes the aerobic oxidative decarboxylation of propionate groups of rings A and B of coproporphyrinogen-III to yield the vinyl groups in protoporphyrinogen-IX. The polypeptide is Oxygen-dependent coproporphyrinogen-III oxidase (Burkholderia ambifaria (strain MC40-6)).